A 114-amino-acid chain; its full sequence is Small ribosomal subunit protein bS16 (114 aa).

The tract at residues 87 to 114 (AFREQPVQSAPKKKAQERAAERAKAAEA) is disordered. Residues 100–114 (KAQERAAERAKAAEA) show a composition bias toward basic and acidic residues.

It belongs to the bacterial ribosomal protein bS16 family.

The chain is Small ribosomal subunit protein bS16 from Acidiphilium cryptum (strain JF-5).